Consider the following 479-residue polypeptide: Sulfate adenylyltransferase subunit 1 (479 aa).

Positions 25–239 (KSLLRFLTCG…EVLETVDIQR (215 aa)) constitute a tr-type G domain. The tract at residues 34-41 (GSVDDGKS) is G1. 34–41 (GSVDDGKS) serves as a coordination point for GTP. The segment at 92–96 (GITID) is G2. Residues 113–116 (DTPG) are G3. GTP-binding positions include 113–117 (DTPGH) and 168–171 (NKMD). The tract at residues 168–171 (NKMD) is G4. Residues 206 to 208 (SAL) form a G5 region.

It belongs to the TRAFAC class translation factor GTPase superfamily. Classic translation factor GTPase family. CysN/NodQ subfamily. Heterodimer composed of CysD, the smaller subunit, and CysN.

It catalyses the reaction sulfate + ATP + H(+) = adenosine 5'-phosphosulfate + diphosphate. Its pathway is sulfur metabolism; hydrogen sulfide biosynthesis; sulfite from sulfate: step 1/3. Functionally, with CysD forms the ATP sulfurylase (ATPS) that catalyzes the adenylation of sulfate producing adenosine 5'-phosphosulfate (APS) and diphosphate, the first enzymatic step in sulfur assimilation pathway. APS synthesis involves the formation of a high-energy phosphoric-sulfuric acid anhydride bond driven by GTP hydrolysis by CysN coupled to ATP hydrolysis by CysD. The polypeptide is Sulfate adenylyltransferase subunit 1 (Salmonella dublin (strain CT_02021853)).